The chain runs to 80 residues: Teretoxin Tsu6.5 (80 aa).

An N-terminal signal peptide occupies residues 1 to 21 (MAINGRLLCLCLVLGLVFESL). Residues 22–42 (GHPSVQEKRAAEDSKPSGERR) constitute a propeptide that is removed on maturation.

This sequence belongs to the teretoxin M (TM) superfamily. In terms of processing, contains 3 disulfide bonds. As to expression, expressed by the venom duct.

The protein resides in the secreted. In Terebra subulata (Chocolate spotted auger), this protein is Teretoxin Tsu6.5.